The sequence spans 414 residues: Putative competence-damage inducible protein (414 aa).

The protein belongs to the CinA family.

The chain is Putative competence-damage inducible protein from Limosilactobacillus fermentum (strain NBRC 3956 / LMG 18251) (Lactobacillus fermentum).